Reading from the N-terminus, the 30-residue chain is Putative alpha-amylase inhibitor (30 aa).

The protein belongs to the leguminous lectin family.

In terms of biological role, lectin and alpha-amylase inhibitor. Acts as a defensive protein against insects. The sequence is that of Putative alpha-amylase inhibitor from Phaseolus vulgaris (Kidney bean).